The primary structure comprises 415 residues: Histidine--tRNA ligase (415 aa).

Belongs to the class-II aminoacyl-tRNA synthetase family. In terms of assembly, homodimer.

The protein localises to the cytoplasm. The catalysed reaction is tRNA(His) + L-histidine + ATP = L-histidyl-tRNA(His) + AMP + diphosphate + H(+). This chain is Histidine--tRNA ligase, found in Clostridium botulinum (strain Kyoto / Type A2).